The following is a 548-amino-acid chain: Transcriptional adapter ADA2a (548 aa).

A disordered region spans residues M1 to E30. The ZZ-type zinc finger occupies P48–F104. Positions 53, 56, 68, 71, 77, 80, 90, and 94 each coordinate Zn(2+). The 53-residue stretch at L106–P158 folds into the SANT domain. An N6-acetyllysine; by GCN5 modification is found at K257. The stretch at Q365–R386 forms a coiled coil. In terms of domain architecture, SWIRM spans P461–T548.

Interacts in vitro with the HAT domain of GCN5 and with the DNA-binding domain of the transcriptional activator DREB1B/CBF1. Post-translationally, acetylated in vitro by GCN5, but acetylation is not essential for biological activity. Expressed in roots and leaves.

The protein resides in the nucleus. Its function is as follows. Required for the function of some acidic activation domains, which activate transcription from a distant site. The exact mechanism of action is not yet known. ADA2 stimulates the acetyltransferase activity of GCN5 on free histones or nucleosomes, probably by opening up the promoter region. In Arabidopsis thaliana (Mouse-ear cress), this protein is Transcriptional adapter ADA2a (ADA2A).